Consider the following 1547-residue polypeptide: RNA replication protein (1547 aa).

One can recognise an Alphavirus-like MT domain in the interval 59 to 227 (NPFAVKAHTH…IHKYEQLEWI (169 aa)). Composition is skewed to basic and acidic residues over residues 477-495 (AKEA…KEEQ) and 503-522 (RAEE…EPNP). The segment at 477–523 (AKEAEATDEPQRPEVKEEQAEASTSGRAEEIQEDPATKKGKEEPNPN) is disordered. Residues 599-690 (EFNQCLVQQF…RVSLTFRCTV (92 aa)) enclose the Fe2OG dioxygenase domain. Positions 793–948 (LRQQGKEWGC…EASELCRYYI (156 aa)) constitute a (+)RNA virus helicase ATP-binding domain. Residue 822–829 (GAGGSGKS) participates in ATP binding. In terms of domain architecture, (+)RNA virus helicase C-terminal spans 949–1082 (NATHRNKKDL…TLREEVAQPI (134 aa)). Residues 1324–1431 (GPSLANDFTA…DGLPALRPSF (108 aa)) form the RdRp catalytic domain.

Belongs to the potexvirus/carlavirus RNA replication protein family.

The catalysed reaction is RNA(n) + a ribonucleoside 5'-triphosphate = RNA(n+1) + diphosphate. It catalyses the reaction ATP + H2O = ADP + phosphate + H(+). Functionally, RNA replication. The central part of this protein possibly functions as an ATP-binding helicase. This is RNA replication protein from Papaya mosaic potexvirus (PMV).